The following is a 265-amino-acid chain: MNTLQAIVLAVIEGITEFLPVSSTGHMIIASSFFGIAHEDFTKLFTIVIQLGAILSVVVLYFKRFFQTLDFYFKLLVAFIPAVVLGLLLSDFIDGLLENPVTVAVSLLIGGLILLKVDEWFNNPNAAETSQKITYLQALKIGLFQCIAMIPGVSRSGASIVGGMSQKLSRTTAAEFSFFLAVPTMLGATVKKCYDYYKAGFELSHDQVNILIIGNVVAFIVALLAIKTFISFLTKNGFKVFGYYRIIAGIILLLIHFFIHPLTII.

A run of 8 helical transmembrane segments spans residues 18-38 (FLPVSSTGHMIIASSFFGIAH), 41-61 (FTKLFTIVIQLGAILSVVVLY), 69-89 (LDFYFKLLVAFIPAVVLGLLL), 95-115 (GLLENPVTVAVSLLIGGLILL), 133-153 (ITYLQALKIGLFQCIAMIPGV), 171-191 (TTAAEFSFFLAVPTMLGATVK), 210-230 (ILIIGNVVAFIVALLAIKTFI), and 245-265 (RIIAGIILLLIHFFIHPLTII).

This sequence belongs to the UppP family.

The protein resides in the cell inner membrane. It catalyses the reaction di-trans,octa-cis-undecaprenyl diphosphate + H2O = di-trans,octa-cis-undecaprenyl phosphate + phosphate + H(+). Its function is as follows. Catalyzes the dephosphorylation of undecaprenyl diphosphate (UPP). Confers resistance to bacitracin. The chain is Undecaprenyl-diphosphatase (uppP) from Flavobacterium johnsoniae (strain ATCC 17061 / DSM 2064 / JCM 8514 / BCRC 14874 / CCUG 350202 / NBRC 14942 / NCIMB 11054 / UW101) (Cytophaga johnsonae).